Here is a 610-residue protein sequence, read N- to C-terminus: UvrABC system protein C (610 aa).

The GIY-YIG domain maps to 16–94; that stretch reads SQPGVYRMYD…IKLYQPRYNV (79 aa). Residues 204–239 form the UVR domain; that stretch reads DQVLTQLIARMEKASQDLAFEEAARIRDQIQAVRRV.

It belongs to the UvrC family. In terms of assembly, interacts with UvrB in an incision complex.

The protein localises to the cytoplasm. Its function is as follows. The UvrABC repair system catalyzes the recognition and processing of DNA lesions. UvrC both incises the 5' and 3' sides of the lesion. The N-terminal half is responsible for the 3' incision and the C-terminal half is responsible for the 5' incision. The sequence is that of UvrABC system protein C from Salmonella typhi.